Here is a 410-residue protein sequence, read N- to C-terminus: Arginine deiminase (410 aa).

The active-site Amidino-cysteine intermediate is the Cys399.

The protein belongs to the arginine deiminase family.

It is found in the cytoplasm. It catalyses the reaction L-arginine + H2O = L-citrulline + NH4(+). The protein operates within amino-acid degradation; L-arginine degradation via ADI pathway; carbamoyl phosphate from L-arginine: step 1/2. This is Arginine deiminase from Listeria monocytogenes serovar 1/2a (strain ATCC BAA-679 / EGD-e).